The sequence spans 152 residues: Protein SprT-like (152 aa).

The 146-residue stretch at leucine 6 to leucine 151 folds into the SprT-like domain. Histidine 67 lines the Zn(2+) pocket. Glutamate 68 is an active-site residue. Histidine 71 lines the Zn(2+) pocket.

The protein belongs to the SprT family. The cofactor is Zn(2+).

It localises to the cytoplasm. This is Protein SprT-like from Lysinibacillus sphaericus (strain C3-41).